Here is a 568-residue protein sequence, read N- to C-terminus: PCNA-interacting partner (568 aa).

Residues 442–555 (QIPTCVHPAP…RNNKAVSKKL (114 aa)) are disordered. Positions 488–500 (NAWNQTGGKSTQP) are enriched in polar residues. Positions 515 to 527 (ANRECTEQGREEN) are enriched in basic and acidic residues.

It belongs to the PARI family.

The protein resides in the cytoplasm. The protein localises to the nucleus. In terms of biological role, required to suppress inappropriate homologous recombination, thereby playing a central role DNA repair and in the maintenance of genomic stability. The chain is PCNA-interacting partner (parpbp) from Danio rerio (Zebrafish).